Reading from the N-terminus, the 167-residue chain is NADH-quinone oxidoreductase subunit B (167 aa).

Cys-40, Cys-41, Cys-105, and Cys-134 together coordinate [4Fe-4S] cluster.

It belongs to the complex I 20 kDa subunit family. In terms of assembly, NDH-1 is composed of 14 different subunits. Subunits NuoB, C, D, E, F, and G constitute the peripheral sector of the complex. Requires [4Fe-4S] cluster as cofactor.

The protein localises to the cell inner membrane. It carries out the reaction a quinone + NADH + 5 H(+)(in) = a quinol + NAD(+) + 4 H(+)(out). Its function is as follows. NDH-1 shuttles electrons from NADH, via FMN and iron-sulfur (Fe-S) centers, to quinones in the respiratory chain. The immediate electron acceptor for the enzyme in this species is believed to be ubiquinone. Couples the redox reaction to proton translocation (for every two electrons transferred, four hydrogen ions are translocated across the cytoplasmic membrane), and thus conserves the redox energy in a proton gradient. The sequence is that of NADH-quinone oxidoreductase subunit B from Campylobacter jejuni subsp. jejuni serotype O:2 (strain ATCC 700819 / NCTC 11168).